The following is a 286-amino-acid chain: MSDWSALHQLLEKVQPYSTAGGKVWIKVLFIFRILLLGTAIESAWSDEQFEFHCNTQQPGCENVCYDQAFPISHVRLWVLQVIFVSVPTLLHLAHVYYVIRQNEKLKKQEEEELKVAHFNGASGERRLQKHTGKHIKCGSKEHGNRKMRGRLLLTYMASIFFKSVFEVAFLLIQWYLYGFTLSAVYICEQSPCPHRVDCFLSRPTEKTIFILFMLVVSMVSFVLNVIELFYVLFKAIKNHLGNEKEEVYCNPVELQKPSCVSSSAVLTTICSSDQVVPVGLSSFYM.

Over M1–K23 the chain is Cytoplasmic. The helical transmembrane segment at V24 to I41 threads the bilayer. The Extracellular portion of the chain corresponds to E42–R76. Residues L77–V99 form a helical membrane-spanning segment. At I100 to R151 the chain is on the cytoplasmic side. The chain crosses the membrane as a helical span at residues L152–Q174. Residues W175–I209 lie on the Extracellular side of the membrane. A helical transmembrane segment spans residues F210 to V232. At L233–M286 the chain is on the cytoplasmic side.

The protein belongs to the connexin family. Alpha-type (group II) subfamily. In terms of assembly, a connexon is composed of a hexamer of connexins. In terms of tissue distribution, expressed in testis.

It localises to the cell membrane. The protein resides in the cell junction. Its subcellular location is the gap junction. In terms of biological role, one gap junction consists of a cluster of closely packed pairs of transmembrane channels, the connexons, through which materials of low MW diffuse from one cell to a neighboring cell. The sequence is that of Gap junction alpha-6 protein (Gja6) from Rattus norvegicus (Rat).